Here is an 831-residue protein sequence, read N- to C-terminus: Probable glucan 1,3-beta-glucosidase D (831 aa).

Composition is skewed to basic and acidic residues over residues 1-24, 44-56, 79-93, 102-115, 137-151, and 198-213; these read MPSH…YREV, RRDD…RSHE, RSHD…RSRA, SRRD…EYRR, RDGQ…DREA, and QRER…MESK. 2 disordered regions span residues 1 to 179 and 192 to 241; these read MPSH…SGSH and HYDE…GQSK. Residues 1–297 lie on the Cytoplasmic side of the membrane; that stretch reads MPSHSRSRDR…AQPPFWKRKK (297 aa). Residues 298-318 traverse the membrane as a helical; Signal-anchor for type II membrane protein segment; that stretch reads WWIVIGVLVVVLAIVIPVAVV. Over 319–831 the chain is Extracellular; the sequence is MSKKHGHDDD…PSFGDLPEYY (513 aa). N376, N381, N393, N410, N442, N546, and N558 each carry an N-linked (GlcNAc...) asparagine glycan. E597 (proton donor) is an active-site residue. N-linked (GlcNAc...) asparagine glycosylation is found at N610, N636, N669, and N689. E702 functions as the Nucleophile in the catalytic mechanism.

It belongs to the glycosyl hydrolase 5 (cellulase A) family.

The protein resides in the cell membrane. It carries out the reaction Successive hydrolysis of beta-D-glucose units from the non-reducing ends of (1-&gt;3)-beta-D-glucans, releasing alpha-glucose.. Its function is as follows. Glucosidase involved in the degradation of cellulosic biomass. Active on lichenan. The polypeptide is Probable glucan 1,3-beta-glucosidase D (exgD) (Aspergillus oryzae (strain ATCC 42149 / RIB 40) (Yellow koji mold)).